A 311-amino-acid polypeptide reads, in one-letter code: Malate dehydrogenase (311 aa).

NAD(+) is bound by residues 7–13 (GAAGGIG) and aspartate 34. Residues arginine 81 and arginine 87 each coordinate substrate. NAD(+) is bound by residues asparagine 94 and 117-119 (ITN). Asparagine 119 and arginine 153 together coordinate substrate. The Proton acceptor role is filled by histidine 177. Methionine 227 is a binding site for NAD(+).

The protein belongs to the LDH/MDH superfamily. MDH type 1 family. As to quaternary structure, homodimer.

It carries out the reaction (S)-malate + NAD(+) = oxaloacetate + NADH + H(+). Its function is as follows. Catalyzes the reversible oxidation of malate to oxaloacetate. This chain is Malate dehydrogenase, found in Histophilus somni (strain 2336) (Haemophilus somnus).